An 800-amino-acid polypeptide reads, in one-letter code: DNA topoisomerase 1 (800 aa).

A Toprim domain is found at 1-111; sequence MKLVIVESPA…VKSDDFFKRV (111 aa). Mg(2+) is bound by residues glutamate 7 and aspartate 80. The region spanning 132–568 is the Topo IA-type catalytic domain; the sequence is DNNLVNAQQA…FWNGFNHNIE (437 aa). Residues 166-171 are interaction with DNA; that stretch reads SAGRVQ. Catalysis depends on tyrosine 304, which acts as the O-(5'-phospho-DNA)-tyrosine intermediate. The C4-type zinc-finger motif lies at 600–627; it reads CPSCKTGELSLKLGKFGAFLACSNYPEC.

The protein belongs to the type IA topoisomerase family. Monomer. It depends on Mg(2+) as a cofactor.

It carries out the reaction ATP-independent breakage of single-stranded DNA, followed by passage and rejoining.. Its function is as follows. Releases the supercoiling and torsional tension of DNA, which is introduced during the DNA replication and transcription, by transiently cleaving and rejoining one strand of the DNA duplex. Introduces a single-strand break via transesterification at a target site in duplex DNA. The scissile phosphodiester is attacked by the catalytic tyrosine of the enzyme, resulting in the formation of a DNA-(5'-phosphotyrosyl)-enzyme intermediate and the expulsion of a 3'-OH DNA strand. The free DNA strand then undergoes passage around the unbroken strand, thus removing DNA supercoils. Finally, in the religation step, the DNA 3'-OH attacks the covalent intermediate to expel the active-site tyrosine and restore the DNA phosphodiester backbone. The sequence is that of DNA topoisomerase 1 from Rickettsia bellii (strain RML369-C).